The chain runs to 988 residues: Squamosa promoter-binding-like protein 16 (988 aa).

Positions 52–79 are disordered; sequence GTPVDLTRPSKKVRSGSPGSGGGGGGNY. Over residues 69-78 the composition is skewed to gly residues; sequence PGSGGGGGGN. The SBP-type zinc-finger motif lies at 79 to 156; that stretch reads YPKCQVDNCK…DGHNRRRRKT (78 aa). Positions 82, 87, 104, 107, 123, 126, 130, and 142 each coordinate Zn(2+). Residues 139 to 155 carry the Bipartite nuclear localization signal motif; sequence KRSCRRRLDGHNRRRRK. Disordered regions lie at residues 240–262 and 289–416; these read RKNP…SSPS and GFGN…DTST. 3 stretches are compositionally biased toward polar residues: residues 250–262, 301–311, and 327–358; these read NPQN…SSPS, LTSSDHSATTS, and RTSS…FTSS. Positions 368–379 are enriched in low complexity; that stretch reads ASSTKYYSSASS.

Zn(2+) serves as cofactor.

It localises to the nucleus. Trans-acting factor that binds specifically to the consensus nucleotide sequence 5'-TNCGTACAA-3'. The polypeptide is Squamosa promoter-binding-like protein 16 (SPL16) (Arabidopsis thaliana (Mouse-ear cress)).